The sequence spans 224 residues: Paired immunoglobulin-like type 2 receptor beta (224 aa).

A signal peptide spans 1–28 (MALLISLPGGTPAMAQVLLLLSSGCLHA). At 29–195 (GNSERYNRKN…NPSLMNLGAM (167 aa)) the chain is on the extracellular side. N-linked (GlcNAc...) asparagine glycans are attached at residues Asn90, Asn107, and Asn154. Residues 196 to 216 (VTMLLAKVLVIVLVYGWMIFL) form a helical membrane-spanning segment. Topologically, residues 217–224 (RWKQRPAH) are cytoplasmic.

As to quaternary structure, interacts with CD99. Probably associates with DAP12. In terms of tissue distribution, widely expressed with highest levels in spleen, liver and lung. Predominantly expressed by natural killer cells, macrophages, and granulocytes and dendritic cells (BM-DC).

The protein resides in the membrane. Paired receptors consist of highly related activating and inhibitory receptors and are widely involved in the regulation of the immune system. PILRB is thought to act as a cellular signaling activating receptor that associates with ITAM-bearing adapter molecules on the cell surface. Seems to associate with DAP12 and is a receptor for CD99. May be involved in target cell recognition by natural killer cells and in activation of dendritic cells. The polypeptide is Paired immunoglobulin-like type 2 receptor beta (Pilrb) (Mus musculus (Mouse)).